A 394-amino-acid polypeptide reads, in one-letter code: Phosphopentomutase (394 aa).

The Mn(2+) site is built by Asp-13, Asp-286, His-291, Asp-327, His-328, and His-339.

This sequence belongs to the phosphopentomutase family. Mn(2+) serves as cofactor.

Its subcellular location is the cytoplasm. It catalyses the reaction 2-deoxy-alpha-D-ribose 1-phosphate = 2-deoxy-D-ribose 5-phosphate. It carries out the reaction alpha-D-ribose 1-phosphate = D-ribose 5-phosphate. Its pathway is carbohydrate degradation; 2-deoxy-D-ribose 1-phosphate degradation; D-glyceraldehyde 3-phosphate and acetaldehyde from 2-deoxy-alpha-D-ribose 1-phosphate: step 1/2. In terms of biological role, isomerase that catalyzes the conversion of deoxy-ribose 1-phosphate (dRib-1-P) and ribose 1-phosphate (Rib-1-P) to deoxy-ribose 5-phosphate (dRib-5-P) and ribose 5-phosphate (Rib-5-P), respectively. In Bacillus cereus (strain G9842), this protein is Phosphopentomutase.